We begin with the raw amino-acid sequence, 341 residues long: Methionine import ATP-binding protein MetN (341 aa).

Positions 2 to 241 constitute an ABC transporter domain; it reads IELNQVVKRY…PQHEVTRRFV (240 aa). Residue 38 to 45 participates in ATP binding; sequence GFSGAGKS.

Belongs to the ABC transporter superfamily. Methionine importer (TC 3.A.1.24) family. In terms of assembly, the complex is composed of two ATP-binding proteins (MetN), two transmembrane proteins (MetI) and a solute-binding protein (MetQ).

The protein localises to the cell membrane. It catalyses the reaction L-methionine(out) + ATP + H2O = L-methionine(in) + ADP + phosphate + H(+). It carries out the reaction D-methionine(out) + ATP + H2O = D-methionine(in) + ADP + phosphate + H(+). Functionally, part of the ABC transporter complex MetNIQ involved in methionine import. Responsible for energy coupling to the transport system. This chain is Methionine import ATP-binding protein MetN, found in Staphylococcus haemolyticus (strain JCSC1435).